A 79-amino-acid polypeptide reads, in one-letter code: Defensin-like protein 54 (79 aa).

A signal peptide spans 1–27 (MGIKKTSATVFLVIILTISFSYYDVEA). 4 disulfide bridges follow: C39/C76, C43/C67, C52/C74, and C56/C75.

It belongs to the DEFL family.

It localises to the secreted. In Arabidopsis thaliana (Mouse-ear cress), this protein is Defensin-like protein 54.